Here is an 827-residue protein sequence, read N- to C-terminus: Tuftelin-interacting protein 11 (827 aa).

Disordered regions lie at residues 31–129 (FNPH…KGFV) and 179–203 (QRKG…DFPV). The segment covering 41 to 60 (TKEEATYGVWAERDSDEERP) has biased composition (basic and acidic residues). The segment covering 88–98 (DVSDEDSDEDE) has biased composition (acidic residues). The span at 99–112 (KPVKQEEIPKEFVP) shows a compositional bias: basic and acidic residues. The G-patch domain maps to 145–191 (TKGIGQKLLQKMGYVPGRGLGKNAQGIINPIEAKQRKGKGAVGAYGS).

This sequence belongs to the TFP11/STIP family. As to quaternary structure, identified in the spliceosome C complex.

It is found in the nucleus. Its function is as follows. Involved in pre-mRNA splicing, specifically in spliceosome disassembly during late-stage splicing events. This is Tuftelin-interacting protein 11 (TFIP11) from Gallus gallus (Chicken).